The sequence spans 518 residues: PTS system mannitol-specific EIICB component (518 aa).

At methionine 1–asparagine 31 the chain is on the cytoplasmic side. Residues phenylalanine 20–aspartate 352 form the PTS EIIC type-2 domain. A helical transmembrane segment spans residues isoleucine 32–asparagine 53. Residues lysine 54–alanine 57 lie on the Extracellular side of the membrane. A helical membrane pass occupies residues glutamine 58 to arginine 78. Topologically, residues leucine 79–phenylalanine 142 are cytoplasmic. Residues serine 143–lysine 164 form a helical membrane-spanning segment. The Extracellular segment spans residues phenylalanine 165 to glycine 173. A helical membrane pass occupies residues valine 174–lysine 194. Over isoleucine 195 to serine 281 the chain is Cytoplasmic. A helical membrane pass occupies residues valine 282–lysine 301. The Extracellular segment spans residues threonine 302 to phenylalanine 321. A helical membrane pass occupies residues leucine 322–leucine 343. The Cytoplasmic segment spans residues lysine 344 to aspartate 518. A disordered region spans residues serine 369–aspartate 406. The segment covering serine 375–threonine 387 has biased composition (basic and acidic residues). Residues alanine 388–asparagine 398 are compositionally biased toward low complexity. A PTS EIIB type-2 domain is found at aspartate 426–aspartate 518. Cysteine 432 serves as the catalytic Phosphocysteine intermediate. At cysteine 432 the chain carries Phosphocysteine; by EIIA.

Homodimer.

The protein localises to the cell membrane. The catalysed reaction is D-mannitol(out) + N(pros)-phospho-L-histidyl-[protein] = D-mannitol 1-phosphate(in) + L-histidyl-[protein]. Its function is as follows. The phosphoenolpyruvate-dependent sugar phosphotransferase system (sugar PTS), a major carbohydrate active transport system, catalyzes the phosphorylation of incoming sugar substrates concomitantly with their translocation across the cell membrane. The enzyme II CmtAB PTS system is involved in D-mannitol transport. In Staphylococcus carnosus, this protein is PTS system mannitol-specific EIICB component.